A 292-amino-acid chain; its full sequence is Pantothenate synthetase (292 aa).

30-37 (MGFLHIGH) contacts ATP. H37 serves as the catalytic Proton donor. Q61 lines the (R)-pantoate pocket. Q61 contacts beta-alanine. 147–150 (GEKD) provides a ligand contact to ATP. Q153 provides a ligand contact to (R)-pantoate. ATP contacts are provided by residues V176 and 184–187 (CSSR).

This sequence belongs to the pantothenate synthetase family. In terms of assembly, homodimer.

It localises to the cytoplasm. It catalyses the reaction (R)-pantoate + beta-alanine + ATP = (R)-pantothenate + AMP + diphosphate + H(+). The protein operates within cofactor biosynthesis; (R)-pantothenate biosynthesis; (R)-pantothenate from (R)-pantoate and beta-alanine: step 1/1. Catalyzes the condensation of pantoate with beta-alanine in an ATP-dependent reaction via a pantoyl-adenylate intermediate. This is Pantothenate synthetase from Agrobacterium fabrum (strain C58 / ATCC 33970) (Agrobacterium tumefaciens (strain C58)).